A 102-amino-acid polypeptide reads, in one-letter code: Small ribosomal subunit protein uS10 (102 aa).

Belongs to the universal ribosomal protein uS10 family. Part of the 30S ribosomal subunit.

In terms of biological role, involved in the binding of tRNA to the ribosomes. This is Small ribosomal subunit protein uS10 from Bacillus thuringiensis (strain Al Hakam).